Here is a 154-residue protein sequence, read N- to C-terminus: Transcriptional repressor NrdR (154 aa).

The segment at 3–34 is a zinc-finger region; the sequence is CPFCRHPDSRVVDSREADEGQAIRRRRSCPEC. An ATP-cone domain is found at 46-136; the sequence is LSVVKRSGVT…VYRSFSSAED (91 aa).

It belongs to the NrdR family. The cofactor is Zn(2+).

In terms of biological role, negatively regulates transcription of bacterial ribonucleotide reductase nrd genes and operons by binding to NrdR-boxes. This chain is Transcriptional repressor NrdR, found in Rhodococcus jostii (strain RHA1).